A 247-amino-acid chain; its full sequence is ATP synthase subunit a, chloroplastic (247 aa).

The next 5 membrane-spanning stretches (helical) occupy residues 38–58 (QVLITSWVVIAILLGSATIAV), 95–115 (VPFIGTMFLFIFVSNWSGALL), 134–154 (INTTVALALLTSVAYFYAGLT), 199–219 (LVVVVLVSLVPLVVPIPVMLL), and 220–240 (GLFTSGIQALIFATLAAAYIG).

It belongs to the ATPase A chain family. As to quaternary structure, F-type ATPases have 2 components, CF(1) - the catalytic core - and CF(0) - the membrane proton channel. CF(1) has five subunits: alpha(3), beta(3), gamma(1), delta(1), epsilon(1). CF(0) has four main subunits: a, b, b' and c.

The protein resides in the plastid. The protein localises to the chloroplast thylakoid membrane. Key component of the proton channel; it plays a direct role in the translocation of protons across the membrane. This chain is ATP synthase subunit a, chloroplastic, found in Nicotiana sylvestris (Wood tobacco).